We begin with the raw amino-acid sequence, 494 residues long: Gram-negative bacteria-binding protein 1 (494 aa).

An N-terminal signal peptide occupies residues 1 to 19; that stretch reads MPGLCIGILLLIGFGCTTA. The 101-residue stretch at 20–120 folds into the CBM39 domain; sequence YKIPTPTVEL…QPLPVCNLGG (101 aa). N-linked (GlcNAc...) asparagine glycans are attached at residues Asn-56 and Asn-81. A disordered region spans residues 126–160; that stretch reads GCSPGDDDFTDDNQLSTEDSALEPTAPSVCEPSES. The GH16 domain occupies 135–494; sequence TDDNQLSTED…DYVRVFATDN (360 aa). Asn-185 carries N-linked (GlcNAc...) asparagine glycosylation.

Belongs to the insect beta-1,3-glucan binding protein family.

The protein resides in the cell membrane. Plays a key role in innate immunity by acting as a pattern recognition receptor for beta-1,3-glucan from fungi and lipopolysaccharide from Gram-negative bacteria. Upon recognition of invading microorganism-derived products, acts upstream of protease spz processing enzyme SPE to activate the Toll pathway and to induce the expression of antimicrobial peptides drosomycin, cecropin and attacin. The chain is Gram-negative bacteria-binding protein 1 from Drosophila melanogaster (Fruit fly).